A 242-amino-acid polypeptide reads, in one-letter code: Zinc-finger homeodomain protein 13 (242 aa).

The segment at 64-111 adopts a ZF-HD dimerization-type; degenerate zinc-finger fold; it reads YYECRKNHAADIGTTAYDGCGEFVSSTGEEDSLNCAACGCHRNFHREE. Residues 144–166 form a disordered region; the sequence is GGKSEGKKKKKEKESYGGDPIIK. The span at 155–166 shows a compositional bias: basic and acidic residues; sequence EKESYGGDPIIK. A DNA-binding region (homeobox) is located at residues 179 to 238; it reads VKRLKTKFTAEQTEKMRDYAEKLRWKVRPERQEEVEEFCVEIGVNRKNFRIWMNNHKDKI.

In terms of assembly, homo- and heterodimer with other ZFHD proteins. Interacts with MIF1, MIF2 and MIF3; these interactions prevent nuclear localization and DNA-binding to inhibit transcription regulation activity. Binds to ZHD11. Mostly expressed in flowers.

Its subcellular location is the nucleus. In terms of biological role, putative transcription factor. This is Zinc-finger homeodomain protein 13 (ZHD13) from Arabidopsis thaliana (Mouse-ear cress).